The sequence spans 456 residues: GTPase Der (456 aa).

2 consecutive EngA-type G domains span residues 3–167 (FTIA…PETE) and 185–360 (IRVA…AVWN). Residues 9-16 (GRPNVGKS), 56-60 (DTAGL), 119-122 (NKSE), 191-198 (GRPNAGKS), 238-242 (DTAGL), and 303-306 (NKWD) each bind GTP. The KH-like domain occupies 361-445 (RRVPTAALNR…PVRITLREKA (85 aa)).

Belongs to the TRAFAC class TrmE-Era-EngA-EngB-Septin-like GTPase superfamily. EngA (Der) GTPase family. As to quaternary structure, associates with the 50S ribosomal subunit.

Functionally, GTPase that plays an essential role in the late steps of ribosome biogenesis. In Bradyrhizobium sp. (strain BTAi1 / ATCC BAA-1182), this protein is GTPase Der.